The primary structure comprises 130 residues: Large ribosomal subunit protein bL19 (130 aa).

The protein belongs to the bacterial ribosomal protein bL19 family.

Its function is as follows. This protein is located at the 30S-50S ribosomal subunit interface and may play a role in the structure and function of the aminoacyl-tRNA binding site. This is Large ribosomal subunit protein bL19 from Burkholderia vietnamiensis (strain G4 / LMG 22486) (Burkholderia cepacia (strain R1808)).